The following is a 255-amino-acid chain: Chlorocatechol 1,2-dioxygenase (255 aa).

Fe cation is bound by residues Y130, Y164, H188, and H190.

This sequence belongs to the intradiol ring-cleavage dioxygenase family. It depends on Fe(3+) as a cofactor.

The enzyme catalyses 3,5-dichlorocatechol + O2 = (2E,4E)-2,4-dichloromuconate + 2 H(+). It participates in aromatic compound metabolism; 3-chlorocatechol degradation. In terms of biological role, preferentially converts 3,5-dichlorocatechol as opposed to other chlorinated catechols. Retains diminished activity toward non-chlorinated substrates. The polypeptide is Chlorocatechol 1,2-dioxygenase (tfdC) (Burkholderia cepacia (Pseudomonas cepacia)).